The chain runs to 424 residues: CinA-like protein (424 aa).

The protein belongs to the CinA family.

The polypeptide is CinA-like protein (Shewanella frigidimarina (strain NCIMB 400)).